Reading from the N-terminus, the 159-residue chain is MSRRNCWICKMCRDESKRPPSNLTLEEVLQWAQSFENLMATKYGPVVYAAYLKMEHSDENIQFWMACETYKKIASRWSRISRAKKLYKIYIQPQSPREINIDSSTRETIIRNIQEPTETCFEEAQKIVYMHMERDSYPRFLKSEMYQKLLKTMQSNNSF.

Positions 34 to 150 (SFENLMATKY…LKSEMYQKLL (117 aa)) constitute an RGS domain.

In terms of biological role, inhibits signal transduction by increasing the GTPase activity of G protein alpha subunits thereby driving them into their inactive GDP-bound form. Binds to both G(i)-alpha and G(q)-alpha. The chain is Regulator of G-protein signaling 13 (RGS13) from Homo sapiens (Human).